Reading from the N-terminus, the 133-residue chain is Protein PROTON GRADIENT REGULATION 5, chloroplastic (133 aa).

A chloroplast-targeting transit peptide spans 1-60 (MAAASISAIGCNQTLIGTSFYGGWGSSISGEDYQTMLSKTVAPPQQARVSRKAIRAVPMM).

This sequence belongs to the PGR5 family. As to quaternary structure, interacts with PGRL1A and PGRL1B. Disulfide bonds; Cys-11 and Cys-105 are probably involved in the formation of disulfide bridges with 'Cys-300' and 'Cys-303' of PGRL1A. 'Cys-272' and 'Cys-275' of PGRL1A may also be used to form the disulfide bridges, but in this case the cyclic electron flow is lost.

The protein localises to the plastid. It is found in the chloroplast thylakoid membrane. In terms of biological role, critical for growth under fluctuating-light conditions. Involved in the regulation of the cyclic electron flow (CEF) around Photosystem I. Essential for the reduction of PGRL1A by ferredoxin and for photoprotection. Contributes to maximize photosynthesis efficiency after a long dark adaptation via the regulation of non-photochemical quenching (NPQ); acts independently from DLDG1. Promotes the induction of steady-state proton motive force (pmf) and energy-dependent quenching (qE). The sequence is that of Protein PROTON GRADIENT REGULATION 5, chloroplastic from Arabidopsis thaliana (Mouse-ear cress).